Reading from the N-terminus, the 378-residue chain is Squalene methyltransferase 1 (378 aa).

A helical membrane pass occupies residues 17 to 37 (LLTWKGVAGLVVAITLGYLII).

Belongs to the class I-like SAM-binding methyltransferase superfamily. Erg6/SMT family.

Its subcellular location is the microsome membrane. The catalysed reaction is squalene + 2 S-adenosyl-L-methionine = 3,22-dimethyl-1,2,23,24-tetradehydro-2,3,22,23-tetrahydrosqualene + 2 S-adenosyl-L-homocysteine + 2 H(+). Functionally, converts squalene to mono- and dimethyl derivatives, but not to tri- and tetramethylated products. Unable to methylate cycloartenol, zymosterol or lanosterol. Methylates both C-3 and C22 positions, but only C-3 position in monomethylated products. Produces mainly dimethylated squalene. This chain is Squalene methyltransferase 1 (TMT-1), found in Botryococcus braunii (Green alga).